Consider the following 819-residue polypeptide: Zinc finger protein 658B (819 aa).

A C2H2-type 1; degenerate zinc finger spans residues 141-166; that stretch reads YLSDEHGKCRKSFYWKAHLIQHERPH. 14 consecutive C2H2-type zinc fingers follow at residues 200 to 222, 278 to 300, 306 to 328, 334 to 356, 362 to 384, 390 to 412, 418 to 440, 446 to 468, 474 to 496, 502 to 524, 530 to 552, 558 to 580, 586 to 608, and 614 to 636; these read YECN…LRIH, YECI…QRIH, YECV…QRVH, YECN…QRIH, YECS…HRIH, YECS…QRIH, YKCN…QNIH, YECS…RRIH, YECS…ERIH, and YECN…HRIH. The segment at 642–664 adopts a C2H2-type 16; degenerate zinc-finger fold; sequence YECNDCGKTFSKTSHLRAHLRTR. C2H2-type zinc fingers lie at residues 670 to 692, 698 to 720, 726 to 748, 754 to 776, and 782 to 805; these read YECS…QRVH, YECN…QRIH, and YECD…TRMH.

Belongs to the krueppel C2H2-type zinc-finger protein family.

Its subcellular location is the nucleus. Its function is as follows. May be involved in transcriptional regulation. This is Zinc finger protein 658B (ZNF658B) from Homo sapiens (Human).